The following is a 376-amino-acid chain: MTRQQTKKNYSLRKLKTGTASVAVALTVLGAGFANQTTVKAEGAKIDWQEEYKKLDEDNAKLVEVVETTSLENEKLKSENEENKKNLDKLSKENQGKLEKLELDYLKKLDHEHKEHQKEQQEQEERQKNQEQLERKYQREVEKRYQEQLQKQQQLETEKQISEASRKSLSRDLEASRAAKKDLEAEHQKLEAEHQKLKEDKQISDASRQGLSRDLEASRAAKKELEANHQKLEAEHQKLKEDKQISDASRQGLSRDLEASRAAKKELEANHQKLEAEAKALKEQLAKQAEELAKLRAGKASDSQTPDTKPGNKAVPGKGQAPQAGTKPNQNKAPMKETKRQLPSTGETANPFFTAAALTVMATAGVAAVVKRKEEN.

The signal sequence occupies residues 1 to 41 (MTRQQTKKNYSLRKLKTGTASVAVALTVLGAGFANQTTVKA). The disordered stretch occupies residues 69 to 271 (TSLENEKLKS…AAKKELEANH (203 aa)). Basic and acidic residues-rich tracts occupy residues 72 to 146 (ENEK…KRYQ), 156 to 203 (ETEK…DKQI), 211 to 245 (LSRD…DKQI), and 253 to 271 (LSRD…EANH). 3 C repeats span residues 153-187 (QQLE…EAEH), 195-229 (QKLK…EANH), and 237-271 (QKLK…EANH). D repeat units lie at residues 272–277 (QKLEAE), 278–283 (AKALKE), 286–291 (AKQAEE), and 293–298 (AKLRAG). Residues 292-348 (LAKLRAGKASDSQTPDTKPGNKAVPGKGQAPQAGTKPNQNKAPMKETKRQLPSTGET) are disordered. The short motif at 342–346 (LPSTG) is the LPXTG sorting signal element. Residue Thr-345 is modified to Pentaglycyl murein peptidoglycan amidated threonine. A propeptide spans 346 to 376 (GETANPFFTAAALTVMATAGVAAVVKRKEEN) (removed by sortase).

It belongs to the M protein family.

It is found in the secreted. It localises to the cell wall. In Streptococcus pyogenes serotype M1, this protein is Immunoglobulin G-binding protein H.